Reading from the N-terminus, the 315-residue chain is Probable cell division protein WhiA (315 aa).

Positions 275–309 form a DNA-binding region, H-T-H motif; sequence TLKELGEMVSSGTVSKSGVNHRLRKIDEIADALRR.

It belongs to the WhiA family.

Involved in cell division and chromosome segregation. The chain is Probable cell division protein WhiA from Lysinibacillus sphaericus (strain C3-41).